A 147-amino-acid polypeptide reads, in one-letter code: Putative acetyltransferase BSU40680 (147 aa).

Positions 1–144 constitute an N-acetyltransferase domain; the sequence is MNVKKITSEQ…PHVLMTKQDD (144 aa). Residues 74–76 and 115–117 contribute to the CoA site; these read ICI and GFY.

This sequence belongs to the UPF0039 (ElaA) family.

Its function is as follows. Could catalyze the transfer of an acetyl group from acetyl coenzyme A (AcCoA) to an acceptor substrate and release both CoA and the acetylated product. The polypeptide is Putative acetyltransferase BSU40680 (yybD) (Bacillus subtilis (strain 168)).